Consider the following 347-residue polypeptide: MATVTSNASPKSFSFTVSNPFKTLIPNKSPSLCYPTRNKNHHRLGFSIKATVSTPPSIATGNAPSPDYRVEILSESLPFIQKFRGKTIVVKYGGAAMTSPELKSSVVSDLVLLACVGLRPILVHGGGPDINRYLKQLNIPAEFRDGLRVTDATTMEIVSMVLVGKVNKNLVSLINAAGATAVGLSGHDGRLLTARPVPNSAQLGFVGEVARVDPSVLRPLVDYGYIPVIASVAADDSGQAYNINADTVAGELAAALGAEKLILLTDVAGILENKEDPSSLIKEIDIKGVKKMIEDGKVAGGMIPKVKCCIRSLAQGVKTASIIDGRRQHSLLHEIMSDEGAGTMITG.

The transit peptide at 1–50 directs the protein to the chloroplast; sequence MATVTSNASPKSFSFTVSNPFKTLIPNKSPSLCYPTRNKNHHRLGFSIKA. At Thr-51 the chain carries N-acetylthreonine. 94–95 provides a ligand contact to ATP; it reads GA. Residues Gly-126, Arg-148, and 242-245 contribute to the N-acetyl-L-glutamate site; that span reads NINA. Lys-260 contributes to the L-arginine binding site. ATP contacts are provided by residues 265-266 and Leu-271; that span reads TD. Lys-282 lines the L-arginine pocket. 297 to 305 contributes to the ATP binding site; the sequence is KVAGGMIPK. L-arginine-binding positions include 334–337 and Gly-342; that span reads EIMS.

This sequence belongs to the acetylglutamate kinase family. ArgB subfamily. As to quaternary structure, interacts with GLB1. Interaction is dependent of MgATP and inhibited by 2-oxoglutarate, arginine, glutamate, citrate, and oxaloacetate.

The protein resides in the plastid. The protein localises to the chloroplast stroma. It catalyses the reaction N-acetyl-L-glutamate + ATP = N-acetyl-L-glutamyl 5-phosphate + ADP. It participates in amino-acid biosynthesis; L-arginine biosynthesis; N(2)-acetyl-L-ornithine from L-glutamate: step 2/4. Its activity is regulated as follows. Inhibited by arginine. Inhibition is relieved by binding to GLB1. Functionally, involved in the arginine biosynthetic pathway via the intermediate compound ornithine. In Arabidopsis thaliana (Mouse-ear cress), this protein is Acetylglutamate kinase, chloroplastic.